Here is a 257-residue protein sequence, read N- to C-terminus: 3-deoxy-manno-octulosonate cytidylyltransferase (257 aa).

It belongs to the KdsB family.

The protein resides in the cytoplasm. It carries out the reaction 3-deoxy-alpha-D-manno-oct-2-ulosonate + CTP = CMP-3-deoxy-beta-D-manno-octulosonate + diphosphate. Its pathway is nucleotide-sugar biosynthesis; CMP-3-deoxy-D-manno-octulosonate biosynthesis; CMP-3-deoxy-D-manno-octulosonate from 3-deoxy-D-manno-octulosonate and CTP: step 1/1. It functions in the pathway bacterial outer membrane biogenesis; lipopolysaccharide biosynthesis. Functionally, activates KDO (a required 8-carbon sugar) for incorporation into bacterial lipopolysaccharide in Gram-negative bacteria. This Rhodospirillum centenum (strain ATCC 51521 / SW) protein is 3-deoxy-manno-octulosonate cytidylyltransferase.